A 177-amino-acid chain; its full sequence is Large ribosomal subunit protein uL6 (177 aa).

The protein belongs to the universal ribosomal protein uL6 family. Part of the 50S ribosomal subunit.

Functionally, this protein binds to the 23S rRNA, and is important in its secondary structure. It is located near the subunit interface in the base of the L7/L12 stalk, and near the tRNA binding site of the peptidyltransferase center. This Rhodospirillum centenum (strain ATCC 51521 / SW) protein is Large ribosomal subunit protein uL6.